The primary structure comprises 932 residues: Protein translocase subunit SecA (932 aa).

ATP-binding positions include glutamine 90, 108–112 (GEGKT), and aspartate 498.

It belongs to the SecA family. Monomer and homodimer. Part of the essential Sec protein translocation apparatus which comprises SecA, SecYEG and auxiliary proteins SecDF. Other proteins may also be involved.

It localises to the cell inner membrane. Its subcellular location is the cellular thylakoid membrane. The protein localises to the cytoplasm. The enzyme catalyses ATP + H2O + cellular proteinSide 1 = ADP + phosphate + cellular proteinSide 2.. Its function is as follows. Part of the Sec protein translocase complex. Interacts with the SecYEG preprotein conducting channel. Has a central role in coupling the hydrolysis of ATP to the transfer of proteins into and across the cell membrane, serving as an ATP-driven molecular motor driving the stepwise translocation of polypeptide chains across the membrane. Functionally, probably participates in protein translocation into and across both the cytoplasmic and thylakoid membranes in cyanobacterial cells. This is Protein translocase subunit SecA from Synechocystis sp. (strain ATCC 27184 / PCC 6803 / Kazusa).